Consider the following 60-residue polypeptide: UPF0434 protein mma_2578 (60 aa).

The protein belongs to the UPF0434 family.

This chain is UPF0434 protein mma_2578, found in Janthinobacterium sp. (strain Marseille) (Minibacterium massiliensis).